The chain runs to 228 residues: Extracellular protease inhibitor 10 (228 aa).

The signal sequence occupies residues 1–22 (MKSAFTLSLALVAVTATISAAA). Kazal-like domains lie at 23-72 (DDNC…ECAS), 90-127 (TSGT…AKCK), and 156-208 (GYQG…EGTL). Residue Asn25 is glycosylated (N-linked (GlcNAc...) asparagine). 3 disulfide bridges follow: Cys26–Cys56, Cys30–Cys49, and Cys38–Cys70. The segment at 69-92 (ECASTPASSATPSPVTSSTGSTSG) is disordered. A compositionally biased stretch (low complexity) spans 71 to 92 (ASTPASSATPSPVTSSTGSTSG). 4 cysteine pairs are disulfide-bonded: Cys96–Cys126, Cys100–Cys119, Cys162–Cys193, and Cys167–Cys186. Asn199 is a glycosylation site (N-linked (GlcNAc...) asparagine).

In terms of assembly, interacts with host subtilisin-like protease P69B.

It is found in the secreted. Functionally, secreted effector that interacts with and inhibits the pathogenesis-related P69B subtilisin-like serine protease of host tomato. Inhibition of host proteases by a pathogen extracellular protease inhibitor forms a specific type of defense-counterdefense mechanism between plants and microbial pathogens. The sequence is that of Extracellular protease inhibitor 10 from Phytophthora infestans (strain T30-4) (Potato late blight agent).